A 507-amino-acid polypeptide reads, in one-letter code: Phosphoprotein (507 aa).

Residues 31–51 (EVSSLRDQTCNPGQENGTTGM) show a composition bias toward polar residues. Disordered stretches follow at residues 31–86 (EVSS…CGER), 123–172 (IEDA…GYSF), and 242–307 (GIVA…DSEY). The segment covering 147–160 (SLDDSTEDSGEDYS) has biased composition (acidic residues). Position 151 is a phosphoserine (S151). Composition is skewed to polar residues over residues 246–271 (GSTS…SAGN) and 289–300 (SGTQLPPRTSNE). The multimerization stretch occupies residues 304-376 (DSEYDDELFS…LSSIMIAIPG (73 aa)). A coiled-coil region spans residues 310 to 339 (ELFSEIQEIRSAITKLTEDNQAILTKLDTL). Positions 459-507 (PSKAVLASLIRSSRVDQSHKHNMLALLKNIKGDDNLNEFYQMVKSITHA) are interaction with the nucleocapsid (N-RNA).

This sequence belongs to the morbillivirus P protein family. Homotetramer. Interacts (via multimerization domain) with polymerase L; this interaction forms the polymerase L-P complex. Interacts (via N-terminus) with N0 (via Ncore); this interaction allows P to chaperon N0 to avoid N polymerization before encapsidation. Interacts (via C-terminus) with N-RNA template; this interaction positions the polymerase on the template for both transcription and replication. Post-translationally, phosphorylation on serines by host CK2 is necessary for the formation of viral factories.

In terms of biological role, essential cofactor of the RNA polymerase L that plays a central role in the transcription and replication by forming the polymerase complex with RNA polymerase L and recruiting L to the genomic N-RNA template for RNA synthesis. Also plays a central role in the encapsidation of nascent RNA chains by forming the encapsidation complex with the nucleocapsid protein N (N-P complex). Acts as a chaperone for newly synthesized free N protein, so-called N0, allowing encapsidation of nascent RNA chains during replication. The nucleoprotein protein N prevents excessive phosphorylation of P, which leads to down-regulation of viral transcription/ replication. Participates, together with N, in the formation of viral factories (viroplasms), which are large inclusions in the host cytoplasm where replication takes place. The sequence is that of Phosphoprotein (P/V) from Canine distemper virus (strain Onderstepoort) (CDV).